Consider the following 448-residue polypeptide: Glucan 1,3-beta-glucosidase I/II (448 aa).

Residues 1-19 form the signal peptide; that stretch reads MLSLKTLLCTLLTVSSVLA. Residues 20–40 constitute a propeptide that is removed on maturation; that stretch reads TPVPARDPSSIQFVHEENKKR. The N-linked (GlcNAc...) asparagine glycan is linked to Asn-165. Catalysis depends on Glu-232, which acts as the Proton donor. Residue Asn-325 is glycosylated (N-linked (GlcNAc...) asparagine). The active-site Nucleophile is Glu-334.

This sequence belongs to the glycosyl hydrolase 5 (cellulase A) family.

The protein localises to the secreted. It localises to the cell wall. It catalyses the reaction Successive hydrolysis of beta-D-glucose units from the non-reducing ends of (1-&gt;3)-beta-D-glucans, releasing alpha-glucose.. In terms of biological role, glucanases possibly play a role in cell expansion during growth, in cell-cell fusion during mating, and in spore release during sporulation. This enzyme hydrolyzes both 1,3-beta- and 1,6-beta-linkages and even has beta-glucosidase activity. It could also function biosynthetically as a transglycosylase. The polypeptide is Glucan 1,3-beta-glucosidase I/II (EXG1) (Saccharomyces cerevisiae (strain ATCC 204508 / S288c) (Baker's yeast)).